The sequence spans 208 residues: Uracil phosphoribosyltransferase (208 aa).

5-phospho-alpha-D-ribose 1-diphosphate is bound by residues R78, R103, and 130–138 (DPMLATGGS). Residues I193 and 198-200 (GDA) each bind uracil. D199 is a 5-phospho-alpha-D-ribose 1-diphosphate binding site.

Belongs to the UPRTase family. The cofactor is Mg(2+).

It carries out the reaction UMP + diphosphate = 5-phospho-alpha-D-ribose 1-diphosphate + uracil. Its pathway is pyrimidine metabolism; UMP biosynthesis via salvage pathway; UMP from uracil: step 1/1. With respect to regulation, allosterically activated by GTP. Catalyzes the conversion of uracil and 5-phospho-alpha-D-ribose 1-diphosphate (PRPP) to UMP and diphosphate. This chain is Uracil phosphoribosyltransferase, found in Psychromonas ingrahamii (strain DSM 17664 / CCUG 51855 / 37).